The primary structure comprises 350 residues: MLSTLKRFGITTGATAAASAKASVIYLFRNETPKSVTIPTPIGLRLEIPVDDYERRGEEYCATVTKFSGDNPDVLNGLKIVSCSTKCDSGIFIEGGNGIGVVTKPGLKVEVGEKAINPIARQMIIDAINEVTTDGVKVRIEVPDGEKIAELTMNKDVGVINGISILGTTGIEYPISDDEYLEHIKSEICVVKALGKKKLILAPGNTSFEFARKRYGDNVVKIGDRVGDSIRLAIEQGFTHIVLVSLPGKITKVASGLMNTHSKYGDARIETLTHAAVLAKLDIEKINKIANSATVTEAITYLLPEERKTLFSIVAKRVLQRLRKIVKNDVKLGVVIISEEGEVLAEEGEL.

It belongs to the CbiD family.

The catalysed reaction is Co-precorrin-5B + S-adenosyl-L-methionine = Co-precorrin-6A + S-adenosyl-L-homocysteine. It participates in cofactor biosynthesis; adenosylcobalamin biosynthesis; cob(II)yrinate a,c-diamide from sirohydrochlorin (anaerobic route): step 6/10. Catalyzes the methylation of C-1 in cobalt-precorrin-5B to form cobalt-precorrin-6A. The sequence is that of Cobalt-precorrin-5B C(1)-methyltransferase from Sulfurisphaera tokodaii (strain DSM 16993 / JCM 10545 / NBRC 100140 / 7) (Sulfolobus tokodaii).